A 118-amino-acid polypeptide reads, in one-letter code: Small ribosomal subunit protein uS13 (118 aa).

Residues 94–118 (GLPLRGQRTKTNARTRKGPRKPIRK) form a disordered region.

Belongs to the universal ribosomal protein uS13 family. As to quaternary structure, part of the 30S ribosomal subunit. Forms a loose heterodimer with protein S19. Forms two bridges to the 50S subunit in the 70S ribosome.

Located at the top of the head of the 30S subunit, it contacts several helices of the 16S rRNA. In the 70S ribosome it contacts the 23S rRNA (bridge B1a) and protein L5 of the 50S subunit (bridge B1b), connecting the 2 subunits; these bridges are implicated in subunit movement. Contacts the tRNAs in the A and P-sites. The chain is Small ribosomal subunit protein uS13 from Alcanivorax borkumensis (strain ATCC 700651 / DSM 11573 / NCIMB 13689 / SK2).